A 120-amino-acid polypeptide reads, in one-letter code: MTRVLVVDDAKFMRVKIREILEEANYIIAGEAADGEQAADLYKKLRPDLVTMDITMPVKNGIKALRDILTFDPKAKVIMCTAMRQQRIVTEAIELGAKDFIVKPFEETKVLEAVSRVMGH.

The Response regulatory domain occupies 3-118 (RVLVVDDAKF…KVLEAVSRVM (116 aa)). Aspartate 53 is modified (4-aspartylphosphate).

The polypeptide is Protein CcdB (ccdB) (Bacillus subtilis (strain 168)).